The sequence spans 275 residues: Pantothenate synthetase (275 aa).

Residue 26 to 33 coordinates ATP; the sequence is MGFLHEGH. Residue His33 is the Proton donor of the active site. Gln57 lines the (R)-pantoate pocket. Residue Gln57 participates in beta-alanine binding. 143–146 provides a ligand contact to ATP; the sequence is GQKD. Gln149 serves as a coordination point for (R)-pantoate. ATP contacts are provided by residues Ala172 and 180–183; that span reads RSSR.

This sequence belongs to the pantothenate synthetase family. In terms of assembly, homodimer.

The protein resides in the cytoplasm. The catalysed reaction is (R)-pantoate + beta-alanine + ATP = (R)-pantothenate + AMP + diphosphate + H(+). It participates in cofactor biosynthesis; (R)-pantothenate biosynthesis; (R)-pantothenate from (R)-pantoate and beta-alanine: step 1/1. In terms of biological role, catalyzes the condensation of pantoate with beta-alanine in an ATP-dependent reaction via a pantoyl-adenylate intermediate. This Gluconobacter oxydans (strain 621H) (Gluconobacter suboxydans) protein is Pantothenate synthetase.